Here is a 165-residue protein sequence, read N- to C-terminus: Regulator of ribonuclease activity A (165 aa).

This sequence belongs to the RraA family. As to quaternary structure, homotrimer. Binds to both RNA-binding sites in the C-terminal region of Rne and to RhlB.

The protein localises to the cytoplasm. Functionally, globally modulates RNA abundance by binding to RNase E (Rne) and regulating its endonucleolytic activity. Can modulate Rne action in a substrate-dependent manner by altering the composition of the degradosome. Modulates RNA-binding and helicase activities of the degradosome. This Actinobacillus pleuropneumoniae serotype 5b (strain L20) protein is Regulator of ribonuclease activity A.